A 446-amino-acid chain; its full sequence is Delta(8)-fatty-acid desaturase (446 aa).

The region spanning 5 to 89 is the Cytochrome b5 heme-binding domain; sequence KKYISVGELE…LEDYLVSEIS (85 aa). Heme-binding residues include H40 and H63. Transmembrane regions (helical) follow at residues 112-132 and 136-156; these read VIYC…GVLC and LWVH…AAYL. Residues 158–162 carry the Histidine box-1 motif; the sequence is HDSGH. Helical transmembrane passes span 174 to 195, 253 to 273, 282 to 302, and 309 to 329; these read FAQV…KWTH, IYLV…LLLF, ALNI…VSCL, and VLFV…FTLN. Residues 195–199 carry the Histidine box-2 motif; the sequence is HNAHH. The Histidine box-3 signature appears at 372–376; the sequence is QLEHH.

The protein belongs to the fatty acid desaturase type 1 family. Requires Fe cation as cofactor. Expressed only in young leaves.

Its subcellular location is the membrane. It carries out the reaction an N-acyl-(4R)-4-hydroxysphinganine + 2 Fe(II)-[cytochrome b5] + O2 + 2 H(+) = a (4R,8E)-4-hydroxysphingenine ceramide + 2 Fe(III)-[cytochrome b5] + 2 H2O. The enzyme catalyses an N-acyl-(4R)-4-hydroxysphinganine + 2 Fe(II)-[cytochrome b5] + O2 + 2 H(+) = a (4R,8Z)-4-hydroxysphing-8-enine ceramide + 2 Fe(III)-[cytochrome b5] + 2 H2O. Plays a major role as delta(8)-fatty-acid desaturase which introduces a double bond at the 8-position in the long-chain base (LCB) of ceramides with or without a hydroxy group at the 4-position. The enzyme produces both the 8E and 8Z isomers (in a 4:1 ratio). This structural modification contributes to the quantitative partitioning of ceramides between the two major sphingolipid classes, glucosylceramides and glycosylinositolphosphoryl ceramides. Sphingolipids are important membrane components involved in environmental stress responses, such as resistance to chilling, and act as cell signaling molecules. This is Delta(8)-fatty-acid desaturase (sld1) from Borago officinalis (Bourrache).